The primary structure comprises 171 residues: Shikimate kinase (171 aa).

14–19 (GAGKST) serves as a coordination point for ATP. Ser-18 provides a ligand contact to Mg(2+). Residues Asp-36, Arg-60, and Gly-82 each coordinate substrate. Arg-120 serves as a coordination point for ATP. Residue Arg-139 participates in substrate binding. Residue Gln-156 participates in ATP binding.

Belongs to the shikimate kinase family. In terms of assembly, monomer. Mg(2+) is required as a cofactor.

It is found in the cytoplasm. The catalysed reaction is shikimate + ATP = 3-phosphoshikimate + ADP + H(+). Its pathway is metabolic intermediate biosynthesis; chorismate biosynthesis; chorismate from D-erythrose 4-phosphate and phosphoenolpyruvate: step 5/7. Functionally, catalyzes the specific phosphorylation of the 3-hydroxyl group of shikimic acid using ATP as a cosubstrate. This chain is Shikimate kinase, found in Shewanella denitrificans (strain OS217 / ATCC BAA-1090 / DSM 15013).